A 500-amino-acid polypeptide reads, in one-letter code: NAD(P)H-quinone oxidoreductase chain 4, chloroplastic (500 aa).

14 helical membrane-spanning segments follow: residues 4–24, 37–57, 87–107, 113–130, 134–154, 167–187, 208–228, 242–262, 272–292, 305–325, 330–350, 386–406, 416–436, and 462–482; these read FPWL…IGFL, ICIC…HFQL, MGPV…AWPV, LFHF…GSFS, LLLF…LLSL, FILY…GMGL, ALEI…SPII, HYST…YGLV, AHSI…IYAA, IAYS…SITD, GSIL…FLAG, LALP…GIIT, ILIT…SLSM, and LFIL…PDFV.

This sequence belongs to the complex I subunit 4 family.

Its subcellular location is the plastid. It localises to the chloroplast thylakoid membrane. The catalysed reaction is a plastoquinone + NADH + (n+1) H(+)(in) = a plastoquinol + NAD(+) + n H(+)(out). It catalyses the reaction a plastoquinone + NADPH + (n+1) H(+)(in) = a plastoquinol + NADP(+) + n H(+)(out). In Illicium oligandrum (Star anise), this protein is NAD(P)H-quinone oxidoreductase chain 4, chloroplastic.